Consider the following 214-residue polypeptide: Charged multivesicular body protein 2b (214 aa).

Positions 25 to 55 (QRQIARDRTALEKQEKQLEMEIKKMAKTGNR) form a coiled coil. A disordered region spans residues 178–199 (MAHAPSAARKTPSAATAKADGI). Residues 202-212 (EDIERQLKALG) carry the MIT-interacting motif motif.

This sequence belongs to the SNF7 family. As to quaternary structure, probable core component of the endosomal sorting required for transport complex III (ESCRT-III). ESCRT-III components are thought to multimerize to form a flat lattice on the perimeter membrane of the endosome.

The protein resides in the cytoplasm. It localises to the cytosol. It is found in the late endosome membrane. Probable core component of the endosomal sorting required for transport complex III (ESCRT-III) which is involved in multivesicular bodies (MVBs) formation and sorting of endosomal cargo proteins into MVBs. MVBs contain intraluminal vesicles (ILVs) that are generated by invagination and scission from the limiting membrane of the endosome and mostly are delivered to lysosomes enabling degradation of membrane proteins, such as stimulated growth factor receptors, lysosomal enzymes and lipids. In Danio rerio (Zebrafish), this protein is Charged multivesicular body protein 2b (chmp2b).